Reading from the N-terminus, the 138-residue chain is Thyrotropin subunit beta (138 aa).

The first 20 residues, 1 to 20 (MTAIFLMSMVFGLACGQTMS), serve as a signal peptide directing secretion. Cystine bridges form between C22–C72, C36–C87, C39–C125, C47–C103, C51–C105, and C108–C115. An N-linked (GlcNAc...) asparagine glycan is attached at N43. Residues 133–138 (VVEFSI) constitute a propeptide that is removed on maturation.

Belongs to the glycoprotein hormones subunit beta family. Heterodimer of a common alpha chain and a unique beta chain which confers biological specificity to thyrotropin, lutropin, follitropin and gonadotropin.

The protein localises to the secreted. In terms of biological role, indispensable for the control of thyroid structure and metabolism. The chain is Thyrotropin subunit beta (TSHB) from Equus caballus (Horse).